Consider the following 342-residue polypeptide: Ribosomal RNA small subunit methyltransferase C (342 aa).

The protein belongs to the methyltransferase superfamily. RsmC family. In terms of assembly, monomer.

It is found in the cytoplasm. It carries out the reaction guanosine(1207) in 16S rRNA + S-adenosyl-L-methionine = N(2)-methylguanosine(1207) in 16S rRNA + S-adenosyl-L-homocysteine + H(+). Its function is as follows. Specifically methylates the guanine in position 1207 of 16S rRNA in the 30S particle. This is Ribosomal RNA small subunit methyltransferase C from Shewanella sp. (strain MR-4).